Reading from the N-terminus, the 397-residue chain is N-acetyllactosaminide beta-1,3-N-acetylglucosaminyltransferase 2 (397 aa).

The Cytoplasmic segment spans residues 1–7 (MSVGRRR). The chain crosses the membrane as a helical; Signal-anchor for type II membrane protein span at residues 8-28 (IKLLGILMMANVFIYFIMEVS). At 29-397 (KSSSQEKNGK…SQLQSAHLKC (369 aa)) the chain is on the lumenal side. 5 N-linked (GlcNAc...) asparagine glycosylation sites follow: Asn-79, Asn-89, Asn-127, Asn-173, and Asn-219.

This sequence belongs to the glycosyltransferase 31 family. As to quaternary structure, interacts with B3GNT8; this interaction greatly increases B3GNT2 catalytic activity, independently of B3GNT8 enzymatic activity. Requires Mn(2+) as cofactor. As to expression, ubiquitous.

Its subcellular location is the golgi apparatus membrane. It catalyses the reaction a beta-D-galactosyl-(1-&gt;4)-N-acetyl-beta-D-glucosaminyl derivative + UDP-N-acetyl-alpha-D-glucosamine = an N-acetyl-beta-D-glucosaminyl-(1-&gt;3)-beta-D-galactosyl-(1-&gt;4)-N-acetyl-beta-D-glucosaminyl derivative + UDP + H(+). Its pathway is protein modification; protein glycosylation. Functionally, beta-1,3-N-acetylglucosaminyltransferase involved in the synthesis of poly-N-acetyllactosamine. Catalyzes the initiation and elongation of poly-N-acetyllactosamine chains. Shows a marked preference for Gal(beta1-4)Glc(NAc)-based acceptors. Probably constitutes the main polylactosamine synthase. The chain is N-acetyllactosaminide beta-1,3-N-acetylglucosaminyltransferase 2 (B3GNT2) from Homo sapiens (Human).